The primary structure comprises 356 residues: Alanine racemase, catabolic (356 aa).

Lysine 35 (proton acceptor; specific for D-alanine) is an active-site residue. Lysine 35 bears the N6-(pyridoxal phosphate)lysine mark. Substrate is bound at residue arginine 130. The active-site Proton acceptor; specific for L-alanine is tyrosine 253. Methionine 301 contacts substrate.

This sequence belongs to the alanine racemase family. Requires pyridoxal 5'-phosphate as cofactor.

The catalysed reaction is L-alanine = D-alanine. In terms of biological role, isomerizes L-alanine to D-alanine which is then oxidized to pyruvate by DadA. The polypeptide is Alanine racemase, catabolic (dadX) (Escherichia coli O6:H1 (strain CFT073 / ATCC 700928 / UPEC)).